The chain runs to 120 residues: Ribonuclease P protein component 2 (120 aa).

Belongs to the eukaryotic/archaeal RNase P protein component 2 family. In terms of assembly, consists of a catalytic RNA component and at least 4-5 protein subunits.

The protein localises to the cytoplasm. The catalysed reaction is Endonucleolytic cleavage of RNA, removing 5'-extranucleotides from tRNA precursor.. In terms of biological role, part of ribonuclease P, a protein complex that generates mature tRNA molecules by cleaving their 5'-ends. The sequence is that of Ribonuclease P protein component 2 from Thermococcus kodakarensis (strain ATCC BAA-918 / JCM 12380 / KOD1) (Pyrococcus kodakaraensis (strain KOD1)).